The sequence spans 408 residues: UDP-N-acetylglucosamine--dolichyl-phosphate N-acetylglucosaminephosphotransferase (408 aa).

A run of 2 helical transmembrane segments spans residues 6–26 and 32–52; these read SLLG…IYLP and WIIV…YKLI. UDP-N-acetyl-alpha-D-glucosamine-binding residues include Asp68 and Glu84. The next 2 membrane-spanning stretches (helical) occupy residues 87-107 and 120-140; these read GICV…FQWF and AALT…VLNL. Lys145 contributes to the dolichyl phosphate binding site. Helical transmembrane passes span 147 to 167 and 181 to 201; these read ILPM…TTVV and LGVV…LAIF. A dolichyl phosphate-binding site is contributed by 200 to 208; it reads IFCTNSINI. Residue Asn207 participates in Mg(2+) binding. Asn213 lines the UDP-N-acetyl-alpha-D-glucosamine pocket. Transmembrane regions (helical) follow at residues 221 to 241 and 258 to 278; these read VVIA…ASSV and HLFS…LLFY. Position 289 (Asp289) interacts with Mg(2+). The helical transmembrane segment at 297–317 threads the bilayer; it reads MCFAVVAILCHFSKTLLLFFI. 338–340 contributes to the UDP-N-acetyl-alpha-D-glucosamine binding site; the sequence is RHR. The next 2 helical transmembrane spans lie at 351-371 and 376-396; these read MEAI…TGPL and LCVY…GIRY.

This sequence belongs to the glycosyltransferase 4 family. Homodimer. Mg(2+) is required as a cofactor.

It is found in the endoplasmic reticulum membrane. The catalysed reaction is a di-trans,poly-cis-dolichyl phosphate + UDP-N-acetyl-alpha-D-glucosamine = an N-acetyl-alpha-D-glucosaminyl-diphospho-di-trans,poly-cis-dolichol + UMP. Its pathway is protein modification; protein glycosylation. Its activity is regulated as follows. Inhibited by natural nucleoside antibiotic tunicamycin, which acts as a structural analog and competitor of UDP-GlcNAc. Its function is as follows. UDP-N-acetylglucosamine--dolichyl-phosphate N-acetylglucosaminephosphotransferase that operates in the biosynthetic pathway of dolichol-linked oligosaccharides, the glycan precursors employed in protein asparagine (N)-glycosylation. The assembly of dolichol-linked oligosaccharides begins on the cytosolic side of the endoplasmic reticulum membrane and finishes in its lumen. The sequential addition of sugars to dolichol pyrophosphate produces dolichol-linked oligosaccharides containing fourteen sugars, including two GlcNAcs, nine mannoses and three glucoses. Once assembled, the oligosaccharide is transferred from the lipid to nascent proteins by oligosaccharyltransferases. Catalyzes the initial step of dolichol-linked oligosaccharide biosynthesis, transfering GlcNAc-1-P from cytosolic UDP-GlcNAc onto the carrier lipid dolichyl phosphate (P-dolichol), yielding GlcNAc-P-P-dolichol embedded in the cytoplasmic leaflet of the endoplasmic reticulum membrane. The polypeptide is UDP-N-acetylglucosamine--dolichyl-phosphate N-acetylglucosaminephosphotransferase (alg7) (Dictyostelium discoideum (Social amoeba)).